Here is a 559-residue protein sequence, read N- to C-terminus: CTP synthase (559 aa).

An amidoligase domain region spans residues 1-283 (MSTSRTTTNN…DTFLIRRLDL (283 aa)). CTP is bound at residue S25. UTP is bound at residue S25. Residues 26 to 31 (SLGKGL) and D83 each bind ATP. The Mg(2+) site is built by D83 and E157. CTP is bound by residues 164–166 (DIE), 204–209 (KTKPTQ), and K240. Residues 204–209 (KTKPTQ) and K240 contribute to the UTP site. One can recognise a Glutamine amidotransferase type-1 domain in the interval 308 to 557 (TVGIVGKYVD…VAAALAAAVT (250 aa)). An L-glutamine-binding site is contributed by G371. The active-site Nucleophile; for glutamine hydrolysis is C398. L-glutamine is bound by residues 399-402 (LGLQ), E421, and R482. Catalysis depends on residues H530 and E532.

It belongs to the CTP synthase family. In terms of assembly, homotetramer.

It carries out the reaction UTP + L-glutamine + ATP + H2O = CTP + L-glutamate + ADP + phosphate + 2 H(+). It catalyses the reaction L-glutamine + H2O = L-glutamate + NH4(+). The enzyme catalyses UTP + NH4(+) + ATP = CTP + ADP + phosphate + 2 H(+). The protein operates within pyrimidine metabolism; CTP biosynthesis via de novo pathway; CTP from UDP: step 2/2. Allosterically activated by GTP, when glutamine is the substrate; GTP has no effect on the reaction when ammonia is the substrate. The allosteric effector GTP functions by stabilizing the protein conformation that binds the tetrahedral intermediate(s) formed during glutamine hydrolysis. Inhibited by the product CTP, via allosteric rather than competitive inhibition. Catalyzes the ATP-dependent amination of UTP to CTP with either L-glutamine or ammonia as the source of nitrogen. Regulates intracellular CTP levels through interactions with the four ribonucleotide triphosphates. The polypeptide is CTP synthase (Corynebacterium efficiens (strain DSM 44549 / YS-314 / AJ 12310 / JCM 11189 / NBRC 100395)).